The following is a 303-amino-acid chain: Diaminopimelate epimerase (303 aa).

3 residues coordinate substrate: Asn15, Gln47, and Asn67. Residue Cys76 is the Proton donor of the active site. Residues 77–78, Asn163, Asn197, and 215–216 each bind substrate; these read GN and ER. Cys224 serves as the catalytic Proton acceptor. A substrate-binding site is contributed by 225–226; that stretch reads GS. Positions 278 to 303 are disordered; that stretch reads FDPATGEWSRDTQGLQGSGNADRGAA.

The protein belongs to the diaminopimelate epimerase family. In terms of assembly, homodimer.

It is found in the cytoplasm. It carries out the reaction (2S,6S)-2,6-diaminopimelate = meso-2,6-diaminopimelate. It functions in the pathway amino-acid biosynthesis; L-lysine biosynthesis via DAP pathway; DL-2,6-diaminopimelate from LL-2,6-diaminopimelate: step 1/1. Its function is as follows. Catalyzes the stereoinversion of LL-2,6-diaminopimelate (L,L-DAP) to meso-diaminopimelate (meso-DAP), a precursor of L-lysine and an essential component of the bacterial peptidoglycan. The sequence is that of Diaminopimelate epimerase from Brucella melitensis biotype 1 (strain ATCC 23456 / CCUG 17765 / NCTC 10094 / 16M).